The primary structure comprises 469 residues: NADH-quinone oxidoreductase subunit N (469 aa).

14 helical membrane passes run 2–22 (IALL…FLCV), 28–48 (RYSI…FFIV), 70–90 (FSFC…ISSF), 101–121 (EMFA…LSVE), 122–142 (LILT…MIAM), 157–177 (FLLS…VFGV), 194–214 (FLSI…IAIF), 233–253 (GFLA…LCFL), 261–281 (ILQG…NLLS), 290–310 (ILIA…SSVG), 315–335 (IYPA…LFAI), 361–381 (AFAF…VGFL), 398–418 (LAIF…KIII), and 447–467 (ILFI…LNLF).

Belongs to the complex I subunit 2 family. As to quaternary structure, NDH-1 is composed of 14 different subunits. Subunits NuoA, H, J, K, L, M, N constitute the membrane sector of the complex.

It is found in the cell inner membrane. The enzyme catalyses a quinone + NADH + 5 H(+)(in) = a quinol + NAD(+) + 4 H(+)(out). Functionally, NDH-1 shuttles electrons from NADH, via FMN and iron-sulfur (Fe-S) centers, to quinones in the respiratory chain. The immediate electron acceptor for the enzyme in this species is believed to be ubiquinone. Couples the redox reaction to proton translocation (for every two electrons transferred, four hydrogen ions are translocated across the cytoplasmic membrane), and thus conserves the redox energy in a proton gradient. The protein is NADH-quinone oxidoreductase subunit N of Campylobacter fetus subsp. fetus (strain 82-40).